The chain runs to 460 residues: Cysteine--tRNA ligase (460 aa).

C28 contacts Zn(2+). Residues 30 to 40 (MTVYDYCHLGH) carry the 'HIGH' region motif. Residues C209, H234, and E238 each coordinate Zn(2+). The short motif at 266 to 270 (KMSKS) is the 'KMSKS' region element. K269 serves as a coordination point for ATP.

The protein belongs to the class-I aminoacyl-tRNA synthetase family. Monomer. Requires Zn(2+) as cofactor.

It localises to the cytoplasm. It catalyses the reaction tRNA(Cys) + L-cysteine + ATP = L-cysteinyl-tRNA(Cys) + AMP + diphosphate. This is Cysteine--tRNA ligase from Pseudomonas putida (strain ATCC 700007 / DSM 6899 / JCM 31910 / BCRC 17059 / LMG 24140 / F1).